The chain runs to 182 residues: Protein GrpE (182 aa).

Residues 1–37 (MSDSSKERKKKFTGMVNKQKSEDQQNNSKQADDLDEL) are disordered.

It belongs to the GrpE family. Homodimer.

It localises to the cytoplasm. Functionally, participates actively in the response to hyperosmotic and heat shock by preventing the aggregation of stress-denatured proteins, in association with DnaK and GrpE. It is the nucleotide exchange factor for DnaK and may function as a thermosensor. Unfolded proteins bind initially to DnaJ; upon interaction with the DnaJ-bound protein, DnaK hydrolyzes its bound ATP, resulting in the formation of a stable complex. GrpE releases ADP from DnaK; ATP binding to DnaK triggers the release of the substrate protein, thus completing the reaction cycle. Several rounds of ATP-dependent interactions between DnaJ, DnaK and GrpE are required for fully efficient folding. The chain is Protein GrpE from Wolbachia sp. subsp. Brugia malayi (strain TRS).